The following is a 297-amino-acid chain: GTP cyclohydrolase FolE2 (297 aa).

Belongs to the GTP cyclohydrolase IV family.

It carries out the reaction GTP + H2O = 7,8-dihydroneopterin 3'-triphosphate + formate + H(+). It functions in the pathway cofactor biosynthesis; 7,8-dihydroneopterin triphosphate biosynthesis; 7,8-dihydroneopterin triphosphate from GTP: step 1/1. Converts GTP to 7,8-dihydroneopterin triphosphate. This is GTP cyclohydrolase FolE2 from Pseudomonas fluorescens (strain ATCC BAA-477 / NRRL B-23932 / Pf-5).